The primary structure comprises 349 residues: Peroxidase 7 (349 aa).

An N-terminal signal peptide occupies residues 1 to 22 (MKLAVVSVVVILGVLVAWPVSA). Cystine bridges form between cysteine 60-cysteine 136, cysteine 93-cysteine 98, cysteine 142-cysteine 341, and cysteine 220-cysteine 252. The active-site Proton acceptor is the histidine 91. Ca(2+) contacts are provided by aspartate 92, valine 95, glycine 97, aspartate 99, and serine 101. Proline 183 contacts substrate. Residue histidine 213 participates in heme b binding. A Ca(2+)-binding site is contributed by threonine 214. Asparagine 231 carries N-linked (GlcNAc...) asparagine glycosylation. Ca(2+) contacts are provided by aspartate 262, threonine 265, and aspartate 270.

This sequence belongs to the peroxidase family. Classical plant (class III) peroxidase subfamily. Heme b serves as cofactor. It depends on Ca(2+) as a cofactor.

The protein localises to the secreted. It catalyses the reaction 2 a phenolic donor + H2O2 = 2 a phenolic radical donor + 2 H2O. Removal of H(2)O(2), oxidation of toxic reductants, biosynthesis and degradation of lignin, suberization, auxin catabolism, response to environmental stresses such as wounding, pathogen attack and oxidative stress. These functions might be dependent on each isozyme/isoform in each plant tissue. The chain is Peroxidase 7 (PER7) from Arabidopsis thaliana (Mouse-ear cress).